Consider the following 252-residue polypeptide: 5'-nucleotidase SurE (252 aa).

A divalent metal cation-binding residues include D8, D9, S39, and N95.

This sequence belongs to the SurE nucleotidase family. A divalent metal cation is required as a cofactor.

Its subcellular location is the cytoplasm. It catalyses the reaction a ribonucleoside 5'-phosphate + H2O = a ribonucleoside + phosphate. Its function is as follows. Nucleotidase that shows phosphatase activity on nucleoside 5'-monophosphates. The chain is 5'-nucleotidase SurE from Clostridium botulinum (strain Okra / Type B1).